We begin with the raw amino-acid sequence, 578 residues long: Zinc finger protein with KRAB and SCAN domains 8 (578 aa).

The segment at 1 to 20 (MAEESRKPSAPSPPDQTPEE) is disordered. S12 carries the post-translational modification Phosphoserine. Residue K26 forms a Glycyl lysine isopeptide (Lys-Gly) (interchain with G-Cter in SUMO2) linkage. In terms of domain architecture, SCAN box spans 51-133 (RLRFRQLCYQ…TLLEDLERQI (83 aa)). A disordered region spans residues 158–205 (ASAPEPPNTQLQSEATQHKSPVPQESQERAMSTSQSPTRSQKGSSGDQ). The segment covering 165 to 205 (NTQLQSEATQHKSPVPQESQERAMSTSQSPTRSQKGSSGDQ) has biased composition (polar residues). Glycyl lysine isopeptide (Lys-Gly) (interchain with G-Cter in SUMO2) cross-links involve residues K176 and K199. S201 carries the phosphoserine modification. Residues 220 to 316 (EKIEDMAVSL…GRLERQRGNP (97 aa)) enclose the KRAB domain. Glycyl lysine isopeptide (Lys-Gly) (interchain with G-Cter in SUMO2) cross-links involve residues K221, K272, and K288. 2 C2H2-type zinc fingers span residues 322–344 (HKCDECGKSFAQSSGLVRHWRIH) and 350–372 (YQCNVCGKAFSYRSALLSHQDIH). Residues K374 and K376 each participate in a glycyl lysine isopeptide (Lys-Gly) (interchain with G-Cter in SUMO2) cross-link. C2H2-type zinc fingers lie at residues 378–400 (YHCKECGKAFSQNTGLILHQRIH), 406–428 (YQCNQCGKAFSQSAGLILHQRIH), 434–456 (YECNECGKAFSHSSHLIGHQRIH), 462–484 (YECDECGKTFRRSSHLIGHQRSH), 490–512 (YKCNECGRAFSQKSGLIEHQRIH), 518–540 (YKCKECGKAFNGNTGLIQHLRIH), and 546–568 (YQCNECGKAFIQRSSLIRHQRIH). Residues K413 and K441 each participate in a glycyl lysine isopeptide (Lys-Gly) (interchain with G-Cter in SUMO2) cross-link. K502 participates in a covalent cross-link: Glycyl lysine isopeptide (Lys-Gly) (interchain with G-Cter in SUMO2). K572 is covalently cross-linked (Glycyl lysine isopeptide (Lys-Gly) (interchain with G-Cter in SUMO2)).

The protein belongs to the krueppel C2H2-type zinc-finger protein family.

The protein localises to the nucleus. Its function is as follows. May be involved in transcriptional regulation. The chain is Zinc finger protein with KRAB and SCAN domains 8 (ZKSCAN8) from Pan troglodytes (Chimpanzee).